The following is a 103-amino-acid chain: MYAVIVTGGKQYKVTEGEFLKIEKLELATGEAVTFDRVLLIGNGDDVKIGAPVVDGAKVVAEVVSQGRHDKVRIIKFRRRKHHMKRQGHRQWFTEIKITGIQA.

Belongs to the bacterial ribosomal protein bL21 family. As to quaternary structure, part of the 50S ribosomal subunit. Contacts protein L20.

Its function is as follows. This protein binds to 23S rRNA in the presence of protein L20. The polypeptide is Large ribosomal subunit protein bL21 (Ectopseudomonas mendocina (strain ymp) (Pseudomonas mendocina)).